The chain runs to 318 residues: Ribosomal RNA small subunit methyltransferase H (318 aa).

S-adenosyl-L-methionine is bound by residues 38 to 40 (AGH), Asp-57, Leu-91, Asp-105, and Gln-112.

This sequence belongs to the methyltransferase superfamily. RsmH family.

It is found in the cytoplasm. The catalysed reaction is cytidine(1402) in 16S rRNA + S-adenosyl-L-methionine = N(4)-methylcytidine(1402) in 16S rRNA + S-adenosyl-L-homocysteine + H(+). Functionally, specifically methylates the N4 position of cytidine in position 1402 (C1402) of 16S rRNA. The chain is Ribosomal RNA small subunit methyltransferase H from Clavibacter michiganensis subsp. michiganensis (strain NCPPB 382).